Reading from the N-terminus, the 490-residue chain is Protoporphyrinogen oxidase (490 aa).

FAD contacts are provided by residues 7-12 (GGGIAG), 32-33 (EK), W40, 61-64 (GPRT), and 466-468 (VSI).

Belongs to the protoporphyrinogen/coproporphyrinogen oxidase family. Protoporphyrinogen oxidase subfamily. Requires FAD as cofactor.

It localises to the mitochondrion. The enzyme catalyses protoporphyrinogen IX + 3 O2 = protoporphyrin IX + 3 H2O2. It functions in the pathway porphyrin-containing compound metabolism; protoporphyrin-IX biosynthesis; protoporphyrin-IX from protoporphyrinogen-IX: step 1/1. In terms of biological role, catalyzes the 6-electron oxidation of protoporphyrinogen-IX to form protoporphyrin-IX. In Schizosaccharomyces pombe (strain 972 / ATCC 24843) (Fission yeast), this protein is Protoporphyrinogen oxidase (hem14).